Here is a 346-residue protein sequence, read N- to C-terminus: D-fructose 1,6-bisphosphatase class 2/sedoheptulose 1,7-bisphosphatase 1 (346 aa).

Mn(2+) contacts are provided by D33, E57, D97, and E100. Substrate-binding positions include 100-102 (EGT), Y131, 176-178 (RAR), and 198-200 (DGD). E225 provides a ligand contact to Mn(2+).

The protein belongs to the FBPase class 2 family. Homotetramer. Mn(2+) is required as a cofactor.

It catalyses the reaction beta-D-fructose 1,6-bisphosphate + H2O = beta-D-fructose 6-phosphate + phosphate. The catalysed reaction is D-sedoheptulose 1,7-bisphosphate + H2O = D-sedoheptulose 7-phosphate + phosphate. It functions in the pathway carbohydrate biosynthesis; Calvin cycle. In terms of biological role, catalyzes the hydrolysis of fructose 1,6-bisphosphate (Fru 1,6-P2) and sedoheptulose 1,7-bisphosphate (Sed 1,7-P2) to fructose 6-phosphate and sedoheptulose 7-phosphate, respectively. The chain is D-fructose 1,6-bisphosphatase class 2/sedoheptulose 1,7-bisphosphatase 1 from Acaryochloris marina (strain MBIC 11017).